Consider the following 736-residue polypeptide: Transcription factor E2F8 (736 aa).

The interval 1–26 is disordered; it reads MEEGSKENCGFNGSPMGSRSPPKQLT. The span at 15 to 26 shows a compositional bias: polar residues; the sequence is PMGSRSPPKQLT. 2 consecutive DNA-binding regions follow at residues 98–167 and 240–326; these read RKEK…IWHG and RKEK…QWTC. 4 disordered regions span residues 386–405, 435–456, 483–551, and 716–736; these read RRKINSAPSSPIKSGDGSSS, SACKAKSTVKQPGGSDKNQTPT, EQTL…AVDD, and PGGMGCSPPESARKLDVGTDD. Residues 393–405 are compositionally biased toward low complexity; sequence PSSPIKSGDGSSS. 2 stretches are compositionally biased toward basic and acidic residues: residues 509–539 and 726–736; these read GRHEGDGTSHSEDHSAQERHPKRLPESDRGC and SARKLDVGTDD.

Belongs to the E2F/DP family. Homodimer and heterodimer: mainly forms homodimers and, to a lesser extent, heterodimers with e2f7.

Its subcellular location is the nucleus. Functionally, atypical E2F transcription factor that participates in various processes such as angiogenesis and polyploidization of specialized cells. Mainly acts as a transcription repressor that binds DNA independently of DP proteins and specifically recognizes the E2 recognition site 5'-TTTC[CG]CGC-3'. Directly represses transcription of classical E2F transcription factors such as e2f1. Acts as a regulator of S-phase by recognizing and binding the E2-related site 5'-TTCCCGCC-3' and mediating repression of G1/S-regulated genes. Acts as a promoter of sprouting angiogenesis, possibly by acting as a transcription activator. This is Transcription factor E2F8 (e2f8) from Xenopus tropicalis (Western clawed frog).